The following is a 984-amino-acid chain: Mast/stem cell growth factor receptor Kit (984 aa).

The N-terminal stretch at 1-21 (MEYHWILLCVSLCFTFHPGDT) is a signal peptide. The Extracellular segment spans residues 22 to 514 (KPTITPAGTY…RTISHDLFSP (493 aa)). Ig-like C2-type domains follow at residues 23 to 97 (PTIT…ERAS), 98 to 197 (IYIY…LTVR), 203 to 300 (PPVI…VWLD), 311 to 395 (PVNN…ASVN), and 398 to 498 (FTIF…QAFT). Intrachain disulfides connect Cys44–Cys87, Cys129–Cys178, Cys144–Cys175, and Cys226–Cys284. 7 N-linked (GlcNAc...) asparagine glycosylation sites follow: Asn227, Asn260, Asn314, Asn351, Asn395, Asn448, and Asn476. A disulfide bridge links Cys421 with Cys487. A helical transmembrane segment spans residues 515–535 (LLIGSVSAACILCLILIVLFY). Topologically, residues 536–984 (KYMQKPKYQI…GTEPFRVQRV (449 aa)) are cytoplasmic. Tyr558 is a binding site for Mg(2+). Residues Tyr558 and Tyr560 each carry the phosphotyrosine; by autocatalysis modification. In terms of domain architecture, Protein kinase spans 579-926 (LRFGKTLGSG…LSDTTKHIYL (348 aa)). ATP-binding positions include 586-593 (GSGAFGKV), Lys613, and 661-667 (EYCCFGD). Phosphotyrosine; by autocatalysis occurs at positions 690 and 707. Residues 711 to 723 (RPSAAGKPSSSSS) show a composition bias toward low complexity. Residues 711–749 (RPSAAGKPSSSSSSEKRRSLREGSPYVEEDSESEMFDED) form a disordered region. Residues 737-749 (VEEDSESEMFDED) show a composition bias toward acidic residues. Asp781 functions as the Proton acceptor in the catalytic mechanism. Arg785 provides a ligand contact to ATP. Mg(2+) contacts are provided by Asn786 and Asp799. Tyr812 and Tyr925 each carry phosphotyrosine; by autocatalysis. Positions 936–963 (PRGREESSTHSMASQPFNSAGNNSPPSR) are disordered. The segment covering 944–960 (THSMASQPFNSAGNNSP) has biased composition (polar residues).

The protein belongs to the protein kinase superfamily. Tyr protein kinase family. CSF-1/PDGF receptor subfamily. Post-translationally, ubiquitinated. Rapidly ubiquitinated after autophosphorylation induced by kitlg/scf binding, leading to internalization and degradation. Autophosphorylated on tyrosine residues. Phosphorylated tyrosine residues are important for interaction with specific binding partners.

Its subcellular location is the cell membrane. It carries out the reaction L-tyrosyl-[protein] + ATP = O-phospho-L-tyrosyl-[protein] + ADP + H(+). In terms of biological role, tyrosine-protein kinase that acts as a cell-surface receptor for the cytokine kitlg/scf and plays an essential role in the regulation of cell survival and proliferation, hematopoiesis, stem cell maintenance, gametogenesis, mast cell development, migration and function, and in melanogenesis. This Takifugu rubripes (Japanese pufferfish) protein is Mast/stem cell growth factor receptor Kit (kit).